Reading from the N-terminus, the 299-residue chain is Protoheme IX farnesyltransferase (299 aa).

The next 9 membrane-spanning stretches (helical) occupy residues 25–45 (VVLL…RAGV), 47–67 (WTVL…AAAV), 95–115 (AAAL…LLTF), 119–139 (LAAW…TGFL), 147–167 (IVIG…AVTG), 173–193 (PLLL…ALAI), 218–238 (VHIL…FAIH), 243–263 (LYLA…IALY), and 277–297 (FSIW…YLLL).

The protein belongs to the UbiA prenyltransferase family. Protoheme IX farnesyltransferase subfamily.

The protein resides in the cell inner membrane. The catalysed reaction is heme b + (2E,6E)-farnesyl diphosphate + H2O = Fe(II)-heme o + diphosphate. It participates in porphyrin-containing compound metabolism; heme O biosynthesis; heme O from protoheme: step 1/1. In terms of biological role, converts heme B (protoheme IX) to heme O by substitution of the vinyl group on carbon 2 of heme B porphyrin ring with a hydroxyethyl farnesyl side group. The protein is Protoheme IX farnesyltransferase of Stutzerimonas stutzeri (strain A1501) (Pseudomonas stutzeri).